The following is a 513-amino-acid chain: ATP synthase subunit alpha (513 aa).

169–176 (GDRQTGKT) contributes to the ATP binding site.

It belongs to the ATPase alpha/beta chains family. F-type ATPases have 2 components, CF(1) - the catalytic core - and CF(0) - the membrane proton channel. CF(1) has five subunits: alpha(3), beta(3), gamma(1), delta(1), epsilon(1). CF(0) has three main subunits: a(1), b(2) and c(9-12). The alpha and beta chains form an alternating ring which encloses part of the gamma chain. CF(1) is attached to CF(0) by a central stalk formed by the gamma and epsilon chains, while a peripheral stalk is formed by the delta and b chains.

Its subcellular location is the cell inner membrane. It catalyses the reaction ATP + H2O + 4 H(+)(in) = ADP + phosphate + 5 H(+)(out). In terms of biological role, produces ATP from ADP in the presence of a proton gradient across the membrane. The alpha chain is a regulatory subunit. This chain is ATP synthase subunit alpha, found in Shewanella putrefaciens (strain CN-32 / ATCC BAA-453).